The sequence spans 706 residues: UvrABC system protein C (706 aa).

Residues 16–95 form the GIY-YIG domain; sequence VEPGVYRFRD…IKEFDPRFNV (80 aa). A UVR domain is found at 208–243; sequence DRLAKDMEQQMTAAAEQLDFERAARLRDDISALKRA. A disordered region spans residues 651–706; it reads APQNGTAPDPAPGTGDPQTPADPHSAATAADIEDDRHATGATGPQMNGSEQQVDRV. Positions 692–706 are enriched in polar residues; sequence TGPQMNGSEQQVDRV.

The protein belongs to the UvrC family. In terms of assembly, interacts with UvrB in an incision complex.

It localises to the cytoplasm. In terms of biological role, the UvrABC repair system catalyzes the recognition and processing of DNA lesions. UvrC both incises the 5' and 3' sides of the lesion. The N-terminal half is responsible for the 3' incision and the C-terminal half is responsible for the 5' incision. This chain is UvrABC system protein C, found in Mycolicibacterium smegmatis (strain ATCC 700084 / mc(2)155) (Mycobacterium smegmatis).